A 104-amino-acid polypeptide reads, in one-letter code: ESAT-6-like protein (104 aa).

The stretch at 12 to 43 forms a coiled coil; sequence MAQAAQDIEQSANAIRGMQNQLASAKDQLRSH.

The protein belongs to the WXG100 family. CFP-10 subfamily. In isolation forms a homodimer. Forms a tight 1:1 complex with EsxA. Forms a complex with EsxA and EccC, probably wholly mediated by EsxB; binds in a pocket in the third FtsK (ATPase) domain of EccC (residues 1163-1208).

Its subcellular location is the secreted. Its function is as follows. May help regulate assembly and function of the type VII secretion system (T7SS). Binds to EccC and induces its multimerization. May serve as a chaperone for EsxA. The chain is ESAT-6-like protein from Thermomonospora curvata (strain ATCC 19995 / DSM 43183 / JCM 3096 / KCTC 9072 / NBRC 15933 / NCIMB 10081 / Henssen B9).